Reading from the N-terminus, the 323-residue chain is Queuosine 5'-phosphate N-glycosylase/hydrolase (323 aa).

Queuosine 5'-phosphate-binding residues include Asn-72, Tyr-93, Lys-199, Phe-229, Asp-231, Asp-298, Trp-302, and Gln-306. Catalysis depends on Asp-231, which acts as the Nucleophile or transition state stabilizer.

The protein belongs to the QNG1 protein family. In terms of assembly, monomer.

The catalysed reaction is queuosine 5'-phosphate + H2O = queuine + D-ribose 5-phosphate. In terms of biological role, catalyzes the hydrolysis of queuosine 5'-phosphate, releasing the nucleobase queuine (q). Is likely required for salvage of queuine from exogenous queuosine (Q) that is imported and then converted to queuosine 5'-phosphate intracellularly. In vitro, can also catalyze the release of the q base directly from Q as substrate; however, Q may not be the biologically relevant substrate. Shows a very low activity on queuosine 3',5'-diphosphate, and cannot release q from queuosine 3'-phosphate and from the 5'-nucleotides AMP, UMP, CMP or GMP, indicating specificity for the queuine base. The polypeptide is Queuosine 5'-phosphate N-glycosylase/hydrolase (Sphaerobacter thermophilus (strain ATCC 49802 / DSM 20745 / KCCM 41009 / NCIMB 13125 / S 6022)).